The following is a 139-amino-acid chain: ATP synthase epsilon chain (139 aa).

It belongs to the ATPase epsilon chain family. As to quaternary structure, F-type ATPases have 2 components, CF(1) - the catalytic core - and CF(0) - the membrane proton channel. CF(1) has five subunits: alpha(3), beta(3), gamma(1), delta(1), epsilon(1). CF(0) has three main subunits: a, b and c.

The protein resides in the cell inner membrane. Functionally, produces ATP from ADP in the presence of a proton gradient across the membrane. The sequence is that of ATP synthase epsilon chain from Alcanivorax borkumensis (strain ATCC 700651 / DSM 11573 / NCIMB 13689 / SK2).